A 467-amino-acid polypeptide reads, in one-letter code: ATP synthase subunit beta, sodium ion specific (467 aa).

ATP is bound at residue 151–158 (GGAGVGKT).

Belongs to the ATPase alpha/beta chains family. In terms of assembly, F-type ATPases have 2 components, CF(1) - the catalytic core - and CF(0) - the membrane proton channel. CF(1) has five subunits: alpha(3), beta(3), gamma(1), delta(1), epsilon(1). CF(0) has three main subunits: a, b and c.

Its subcellular location is the cell membrane. The catalysed reaction is 4 Na(+)(in) + ATP + H2O = 4 Na(+)(out) + ADP + phosphate + H(+). In terms of biological role, produces ATP from ADP in the presence of a sodium ion gradient across the membrane. The beta chain is the catalytic subunit. The sequence is that of ATP synthase subunit beta, sodium ion specific from Propionigenium modestum.